A 359-amino-acid chain; its full sequence is Chorismate synthase (359 aa).

Arginine 47 is a binding site for NADP(+). Residues 123–125 (RSS), glycine 283, 298–302 (KPTSS), and arginine 326 contribute to the FMN site.

Belongs to the chorismate synthase family. In terms of assembly, homotetramer. FMNH2 is required as a cofactor.

It carries out the reaction 5-O-(1-carboxyvinyl)-3-phosphoshikimate = chorismate + phosphate. Its pathway is metabolic intermediate biosynthesis; chorismate biosynthesis; chorismate from D-erythrose 4-phosphate and phosphoenolpyruvate: step 7/7. Catalyzes the anti-1,4-elimination of the C-3 phosphate and the C-6 proR hydrogen from 5-enolpyruvylshikimate-3-phosphate (EPSP) to yield chorismate, which is the branch point compound that serves as the starting substrate for the three terminal pathways of aromatic amino acid biosynthesis. This reaction introduces a second double bond into the aromatic ring system. The sequence is that of Chorismate synthase from Chlamydia caviae (strain ATCC VR-813 / DSM 19441 / 03DC25 / GPIC) (Chlamydophila caviae).